Consider the following 498-residue polypeptide: Probable malate:quinone oxidoreductase 2 (498 aa).

Belongs to the MQO family. It depends on FAD as a cofactor.

It catalyses the reaction (S)-malate + a quinone = a quinol + oxaloacetate. Its pathway is carbohydrate metabolism; tricarboxylic acid cycle; oxaloacetate from (S)-malate (quinone route): step 1/1. The sequence is that of Probable malate:quinone oxidoreductase 2 from Staphylococcus epidermidis (strain ATCC 12228 / FDA PCI 1200).